We begin with the raw amino-acid sequence, 438 residues long: GTPase Obg (438 aa).

Residues 1–159 (MAFRDVLNIE…RRVRLELRLI (159 aa)) form the Obg domain. The OBG-type G domain occupies 160–332 (ADVGLVGYPN…LRETLFQLLP (173 aa)). ATP is bound by residues 166-173 (GYPNAGKS), 191-195 (FTTLS), 219-222 (DIPG), 285-288 (NKVE), and 313-315 (SAK). Residues Ser-173 and Thr-193 each contribute to the Mg(2+) site. Positions 357–435 (IVFREDAPAK…IGTFRFEYFD (79 aa)) constitute an OCT domain.

The protein belongs to the TRAFAC class OBG-HflX-like GTPase superfamily. OBG GTPase family. Monomer. Mg(2+) is required as a cofactor.

It localises to the cytoplasm. In terms of biological role, an essential GTPase which binds GTP, GDP and possibly (p)ppGpp with moderate affinity, with high nucleotide exchange rates and a fairly low GTP hydrolysis rate. Plays a role in control of the cell cycle, stress response, ribosome biogenesis and in those bacteria that undergo differentiation, in morphogenesis control. This Deinococcus radiodurans (strain ATCC 13939 / DSM 20539 / JCM 16871 / CCUG 27074 / LMG 4051 / NBRC 15346 / NCIMB 9279 / VKM B-1422 / R1) protein is GTPase Obg.